We begin with the raw amino-acid sequence, 381 residues long: Estradiol 17-beta-dehydrogenase 2 (381 aa).

A helical; Signal-anchor for type II membrane protein transmembrane segment spans residues 4 to 24 (FSSESAWLCLTATAVLGGMLL). 83-112 (QKAVLVTGADSGFGHALAKHLDKLGFTVFA) contributes to the NAD(+) binding site. Residue Ser-220 coordinates substrate. Tyr-233 functions as the Proton acceptor in the catalytic mechanism.

This sequence belongs to the short-chain dehydrogenases/reductases (SDR) family. In terms of assembly, homodimer. Highly expressed in the placenta, and in the small intestine, and liver.

The protein resides in the endoplasmic reticulum membrane. It carries out the reaction 17beta-estradiol + NAD(+) = estrone + NADH + H(+). The catalysed reaction is testosterone + NAD(+) = androst-4-ene-3,17-dione + NADH + H(+). It catalyses the reaction 17beta-hydroxy-5alpha-androstan-3-one + NAD(+) = 5alpha-androstan-3,17-dione + NADH + H(+). The enzyme catalyses (20S)-hydroxypregn-4-en-3-one + NAD(+) = progesterone + NADH + H(+). In terms of biological role, catalyzes the NAD-dependent oxidation of highly active 17beta-hydroxysteroids, such as estradiol (E2), testosterone (T), and dihydrotestosterone (DHT), to their less active forms and thus regulates the biological potency of these steroids. Oxidizes estradiol to estrone, testosterone to androstenedione, and dihydrotestosterone to 5alpha-androstan-3,17-dione. Also has 20-alpha-HSD activity. The polypeptide is Estradiol 17-beta-dehydrogenase 2 (Hsd17b2) (Rattus norvegicus (Rat)).